We begin with the raw amino-acid sequence, 503 residues long: Lysine--tRNA ligase (503 aa).

Mg(2+) is bound by residues Glu-414 and Glu-421.

This sequence belongs to the class-II aminoacyl-tRNA synthetase family. In terms of assembly, homodimer. The cofactor is Mg(2+).

Its subcellular location is the cytoplasm. The catalysed reaction is tRNA(Lys) + L-lysine + ATP = L-lysyl-tRNA(Lys) + AMP + diphosphate. The chain is Lysine--tRNA ligase from Neisseria gonorrhoeae (strain NCCP11945).